The sequence spans 397 residues: uncharacterized protein (397 aa).

Belongs to the ROK (NagC/XylR) family.

This is an uncharacterized protein from Escherichia coli (strain K12).